The primary structure comprises 364 residues: 3-isopropylmalate dehydrogenase (364 aa).

79–92 provides a ligand contact to NAD(+); sequence GPKWNNINETSRPE. The substrate site is built by Arg-100, Arg-110, Arg-139, and Asp-228. Residues Asp-228, Asp-252, and Asp-256 each coordinate Mg(2+). 286–298 lines the NAD(+) pocket; sequence GSAPDIAGKNIAN.

Belongs to the isocitrate and isopropylmalate dehydrogenases family. LeuB type 1 subfamily. In terms of assembly, homodimer. Mg(2+) is required as a cofactor. Mn(2+) serves as cofactor.

Its subcellular location is the cytoplasm. The catalysed reaction is (2R,3S)-3-isopropylmalate + NAD(+) = 4-methyl-2-oxopentanoate + CO2 + NADH. It functions in the pathway amino-acid biosynthesis; L-leucine biosynthesis; L-leucine from 3-methyl-2-oxobutanoate: step 3/4. In terms of biological role, catalyzes the oxidation of 3-carboxy-2-hydroxy-4-methylpentanoate (3-isopropylmalate) to 3-carboxy-4-methyl-2-oxopentanoate. The product decarboxylates to 4-methyl-2 oxopentanoate. This chain is 3-isopropylmalate dehydrogenase, found in Blochmanniella floridana.